The following is a 262-amino-acid chain: Abhydrolase domain-containing protein ACTT2-2 (262 aa).

Positions 260 to 262 match the Peroxisomal targeting signal type 1 motif; it reads SKL.

Belongs to the AB hydrolase superfamily. AKT2 hydrolase family.

It localises to the peroxisome. The protein operates within mycotoxin biosynthesis. Abhydrolase domain-containing protein; part of the gene clusters that mediate the biosynthesis of the host-selective toxins (HSTs) ACT-toxins responsible for brown spot of tangerine disease by the tangerine pathotype which affects tangerines and mandarins. ACT-toxins consist of three moieties, 9,10-epoxy-8-hydroxy-9-methyl-decatrienoic acid (EDA), valine and a polyketide. ACT-toxin I is toxic to both citrus and pear; toxin II the 5''-deoxy derivative of ACT-toxin I, is highly toxic to pear and slightly toxic to citrus. On cellular level, ACT-toxins affect plasma membrane of susceptible cells and cause a sudden increase in loss of K(+) after a few minutes of toxin treatment. The acyl-CoA ligase ACTT1, the hydrolase ACTT2, the enoyl-CoA hydratases ACTT3 and ACTT6, and the acyl-CoA synthetase ACTT5 are all involved in the biosynthesis of the AK-, AF- and ACT-toxin common 9,10-epoxy-8-hydroxy-9-methyl-decatrienoic acid (EDA) structural moiety. The exact role of each enzyme, and of additional enzymes identified within the AF-toxin clusters have still to be determined. On the other hand, ACTTS1 to ACTTS4 are specific to the tangerine pathotype. The function of ACTTS3 is to elongate the polyketide chain portion of ACT-toxin that is unique to this toxin. The enoyl-reductase ACTTS2 might complement the missing enoyl-reductase (ER) domain in ACTTS3 in the synthesis of the polyketide portion of ACT-toxin. The roles of the nonribosomal peptide synthetases-related proteins ACTTS1 and ACTTS4 have also still not been elucidated. The polypeptide is Abhydrolase domain-containing protein ACTT2-2 (ACTT2-2) (Alternaria alternata (Alternaria rot fungus)).